The sequence spans 241 residues: Probable 2-phosphosulfolactate phosphatase (241 aa).

It belongs to the ComB family. Mg(2+) is required as a cofactor.

The enzyme catalyses (2R)-O-phospho-3-sulfolactate + H2O = (2R)-3-sulfolactate + phosphate. In Caldanaerobacter subterraneus subsp. tengcongensis (strain DSM 15242 / JCM 11007 / NBRC 100824 / MB4) (Thermoanaerobacter tengcongensis), this protein is Probable 2-phosphosulfolactate phosphatase.